A 179-amino-acid chain; its full sequence is MARLQQHFREKLAPELMAKFGYTSPMQVPRLTKITLNMGVSEAVADKKVMDHAVSDLGKIAGQKPVVTMSKKAIAGFKIRENQAIGCMVTLRGVQMFEFLDRFVTVALPRVRDFRGISGRAFDGRGNYNIGVKEQIIFPEIEYDKVDALRGLNISITTTAKTDEECKALLTGFRFPFKN.

It belongs to the universal ribosomal protein uL5 family. As to quaternary structure, part of the 50S ribosomal subunit; part of the 5S rRNA/L5/L18/L25 subcomplex. Contacts the 5S rRNA and the P site tRNA. Forms a bridge to the 30S subunit in the 70S ribosome.

This is one of the proteins that bind and probably mediate the attachment of the 5S RNA into the large ribosomal subunit, where it forms part of the central protuberance. In the 70S ribosome it contacts protein S13 of the 30S subunit (bridge B1b), connecting the 2 subunits; this bridge is implicated in subunit movement. Contacts the P site tRNA; the 5S rRNA and some of its associated proteins might help stabilize positioning of ribosome-bound tRNAs. This Albidiferax ferrireducens (strain ATCC BAA-621 / DSM 15236 / T118) (Rhodoferax ferrireducens) protein is Large ribosomal subunit protein uL5.